The primary structure comprises 293 residues: Protease HtpX homolog (293 aa).

2 helical membrane-spanning segments follow: residues 4-24 (IFLF…VLSL) and 39-59 (PMLL…SLLI). Residue H144 coordinates Zn(2+). E145 is a catalytic residue. H148 provides a ligand contact to Zn(2+). The next 2 helical transmembrane spans lie at 159-179 (LVQG…GYFV) and 200-220 (ITVL…VAWF). Residue E225 coordinates Zn(2+).

The protein belongs to the peptidase M48B family. Requires Zn(2+) as cofactor.

The protein localises to the cell inner membrane. The chain is Protease HtpX homolog from Herminiimonas arsenicoxydans.